Here is a 213-residue protein sequence, read N- to C-terminus: Pyridoxine/pyridoxamine 5'-phosphate oxidase (213 aa).

FMN is bound by residues 60 to 65 (RMVLMK), 75 to 76 (YS), K82, and Q104. K65 is a binding site for substrate. 2 residues coordinate substrate: Y122 and R126. FMN is bound by residues 139-140 (QS) and W184. 190–192 (RLH) contacts substrate. R194 contacts FMN.

It belongs to the pyridoxamine 5'-phosphate oxidase family. In terms of assembly, homodimer. FMN is required as a cofactor.

The catalysed reaction is pyridoxamine 5'-phosphate + O2 + H2O = pyridoxal 5'-phosphate + H2O2 + NH4(+). The enzyme catalyses pyridoxine 5'-phosphate + O2 = pyridoxal 5'-phosphate + H2O2. The protein operates within cofactor metabolism; pyridoxal 5'-phosphate salvage; pyridoxal 5'-phosphate from pyridoxamine 5'-phosphate: step 1/1. It functions in the pathway cofactor metabolism; pyridoxal 5'-phosphate salvage; pyridoxal 5'-phosphate from pyridoxine 5'-phosphate: step 1/1. Its function is as follows. Catalyzes the oxidation of either pyridoxine 5'-phosphate (PNP) or pyridoxamine 5'-phosphate (PMP) into pyridoxal 5'-phosphate (PLP). This Rhodopseudomonas palustris (strain BisA53) protein is Pyridoxine/pyridoxamine 5'-phosphate oxidase.